A 61-amino-acid chain; its full sequence is uncharacterized protein (61 aa).

A disordered region spans residues threonine 38–glutamine 61.

This is an uncharacterized protein from Homo sapiens (Human).